The chain runs to 132 residues: Small ribosomal subunit protein uS11 (132 aa).

The interval 1 to 21 is disordered; sequence MAAPKSAVRKPRRKDKKNIAV. The span at 7 to 16 shows a compositional bias: basic residues; it reads AVRKPRRKDK.

This sequence belongs to the universal ribosomal protein uS11 family. In terms of assembly, part of the 30S ribosomal subunit. Interacts with proteins S7 and S18. Binds to IF-3.

Located on the platform of the 30S subunit, it bridges several disparate RNA helices of the 16S rRNA. Forms part of the Shine-Dalgarno cleft in the 70S ribosome. This Clavibacter sepedonicus (Clavibacter michiganensis subsp. sepedonicus) protein is Small ribosomal subunit protein uS11.